The sequence spans 141 residues: MATIKVDVVSAEEQIFSGLAKFVALPGEAGELGILPGHTPLITRIRPGAVRIEAESGDEEFVFVAGGILEVQPGAVTVLADTAIRGKDLDAAKAEEARKRAEETLQNAKSDIDLAKAQSELATAMAQLEAIQRLAKIRGRH.

The protein belongs to the ATPase epsilon chain family. As to quaternary structure, F-type ATPases have 2 components, CF(1) - the catalytic core - and CF(0) - the membrane proton channel. CF(1) has five subunits: alpha(3), beta(3), gamma(1), delta(1), epsilon(1). CF(0) has three main subunits: a, b and c.

It is found in the cell inner membrane. In terms of biological role, produces ATP from ADP in the presence of a proton gradient across the membrane. The sequence is that of ATP synthase epsilon chain from Burkholderia thailandensis (strain ATCC 700388 / DSM 13276 / CCUG 48851 / CIP 106301 / E264).